The primary structure comprises 31 residues: Cytochrome b6-f complex subunit 6 (31 aa).

The chain crosses the membrane as a helical span at residues 4 to 26; the sequence is ITSYFGFLLAALTITPALLISLN.

Belongs to the PetL family. As to quaternary structure, the 4 large subunits of the cytochrome b6-f complex are cytochrome b6, subunit IV (17 kDa polypeptide, PetD), cytochrome f and the Rieske protein, while the 4 small subunits are PetG, PetL, PetM and PetN. The complex functions as a dimer.

It localises to the plastid. Its subcellular location is the chloroplast thylakoid membrane. Functionally, component of the cytochrome b6-f complex, which mediates electron transfer between photosystem II (PSII) and photosystem I (PSI), cyclic electron flow around PSI, and state transitions. PetL is important for photoautotrophic growth as well as for electron transfer efficiency and stability of the cytochrome b6-f complex. The polypeptide is Cytochrome b6-f complex subunit 6 (Dioscorea elephantipes (Elephant's foot yam)).